Consider the following 207-residue polypeptide: Ribosomal RNA small subunit methyltransferase G (207 aa).

S-adenosyl-L-methionine contacts are provided by residues Gly-75, Phe-80, 126 to 127 (LE), and Arg-140.

It belongs to the methyltransferase superfamily. RNA methyltransferase RsmG family.

Its subcellular location is the cytoplasm. The enzyme catalyses guanosine(527) in 16S rRNA + S-adenosyl-L-methionine = N(7)-methylguanosine(527) in 16S rRNA + S-adenosyl-L-homocysteine. Its function is as follows. Specifically methylates the N7 position of guanine in position 527 of 16S rRNA. The polypeptide is Ribosomal RNA small subunit methyltransferase G (Erythrobacter litoralis (strain HTCC2594)).